Here is a 364-residue protein sequence, read N- to C-terminus: Guanine nucleotide-binding protein alpha-8 subunit (364 aa).

Gly2 carries the N-myristoyl glycine lipid modification. Cys5 carries the S-palmitoyl cysteine lipid modification. The region spanning 38–364 (KILKLLILGP…QHTMQKVGIQ (327 aa)) is the G-alpha domain. The tract at residues 41 to 54 (KLLILGPGESGKST) is G1 motif. Residues 46–53 (GPGESGKS), 186–192 (LKSRVPT), 211–215 (DVGGQ), 280–283 (NKID), and Ala336 each bind GTP. Mg(2+)-binding residues include Ser53 and Thr192. The interval 184–192 (DILKSRVPT) is G2 motif. Residues 207-216 (FRIFDVGGQR) form a G3 motif region. The interval 276–283 (ILFLNKID) is G4 motif. Positions 334–339 (TCATDT) are G5 motif.

Belongs to the G-alpha family. As to quaternary structure, g proteins are composed of 3 units; alpha, beta and gamma. The alpha chain contains the guanine nucleotide binding site.

Guanine nucleotide-binding proteins (G proteins) are involved as modulators or transducers in various transmembrane signaling systems. This is Guanine nucleotide-binding protein alpha-8 subunit (gpa-8) from Caenorhabditis elegans.